We begin with the raw amino-acid sequence, 366 residues long: Aminomethyltransferase (366 aa).

This sequence belongs to the GcvT family. The glycine cleavage system is composed of four proteins: P, T, L and H.

It catalyses the reaction N(6)-[(R)-S(8)-aminomethyldihydrolipoyl]-L-lysyl-[protein] + (6S)-5,6,7,8-tetrahydrofolate = N(6)-[(R)-dihydrolipoyl]-L-lysyl-[protein] + (6R)-5,10-methylene-5,6,7,8-tetrahydrofolate + NH4(+). The glycine cleavage system catalyzes the degradation of glycine. This is Aminomethyltransferase from Bacillus cereus (strain G9842).